Consider the following 23-residue polypeptide: Aldehyde dehydrogenase (23 aa).

It belongs to the aldehyde dehydrogenase family.

The enzyme catalyses an aldehyde + NAD(+) + H2O = a carboxylate + NADH + 2 H(+). The protein is Aldehyde dehydrogenase of Moraxella sp. (strain TAE123).